We begin with the raw amino-acid sequence, 103 residues long: Co-chaperonin GroES (103 aa).

The protein belongs to the GroES chaperonin family. In terms of assembly, heptamer of 7 subunits arranged in a ring. Interacts with the chaperonin GroEL.

Its subcellular location is the cytoplasm. Functionally, together with the chaperonin GroEL, plays an essential role in assisting protein folding. The GroEL-GroES system forms a nano-cage that allows encapsulation of the non-native substrate proteins and provides a physical environment optimized to promote and accelerate protein folding. GroES binds to the apical surface of the GroEL ring, thereby capping the opening of the GroEL channel. The chain is Co-chaperonin GroES from Synechococcus sp. (strain CC9311).